A 287-amino-acid polypeptide reads, in one-letter code: ATP synthase gamma chain (287 aa).

This sequence belongs to the ATPase gamma chain family. F-type ATPases have 2 components, CF(1) - the catalytic core - and CF(0) - the membrane proton channel. CF(1) has five subunits: alpha(3), beta(3), gamma(1), delta(1), epsilon(1). CF(0) has three main subunits: a, b and c.

It localises to the cell inner membrane. Produces ATP from ADP in the presence of a proton gradient across the membrane. The gamma chain is believed to be important in regulating ATPase activity and the flow of protons through the CF(0) complex. The chain is ATP synthase gamma chain from Yersinia enterocolitica serotype O:8 / biotype 1B (strain NCTC 13174 / 8081).